Consider the following 369-residue polypeptide: Chorismate synthase (369 aa).

Positions 48 and 54 each coordinate NADP(+). FMN is bound by residues 125–127, 238–239, glycine 278, 293–297, and arginine 319; these read RSS, NA, and KPTSS.

The protein belongs to the chorismate synthase family. Homotetramer. FMNH2 serves as cofactor.

The enzyme catalyses 5-O-(1-carboxyvinyl)-3-phosphoshikimate = chorismate + phosphate. Its pathway is metabolic intermediate biosynthesis; chorismate biosynthesis; chorismate from D-erythrose 4-phosphate and phosphoenolpyruvate: step 7/7. Its function is as follows. Catalyzes the anti-1,4-elimination of the C-3 phosphate and the C-6 proR hydrogen from 5-enolpyruvylshikimate-3-phosphate (EPSP) to yield chorismate, which is the branch point compound that serves as the starting substrate for the three terminal pathways of aromatic amino acid biosynthesis. This reaction introduces a second double bond into the aromatic ring system. The protein is Chorismate synthase of Burkholderia pseudomallei (strain 1106a).